A 226-amino-acid chain; its full sequence is Urease accessory protein UreF (226 aa).

The protein belongs to the UreF family. UreD, UreF and UreG form a complex that acts as a GTP-hydrolysis-dependent molecular chaperone, activating the urease apoprotein by helping to assemble the nickel containing metallocenter of UreC. The UreE protein probably delivers the nickel.

The protein localises to the cytoplasm. Functionally, required for maturation of urease via the functional incorporation of the urease nickel metallocenter. The protein is Urease accessory protein UreF of Paraburkholderia phymatum (strain DSM 17167 / CIP 108236 / LMG 21445 / STM815) (Burkholderia phymatum).